A 182-amino-acid chain; its full sequence is MASITRLDAVSPYLIRRFKNDLRALDAVKQSNCVYVGNLSFYTTEEQIYALFSKCGEIRRIIMGVDRFTKTPCGFCFVEYFENQDALDSLKYISRTSLDERIIRADLDHGYEEGRQYGRGASGGQVRDEMREEFDPGRGGYAKNRQPTSSRQLANYSGISSAPLGSSLELQSNPRYNRWKKN.

Residues Tyr13, Tyr35, Arg104–Asp108, Arg115–Arg119, and Gln125–Val126 each bind mRNA. The 79-residue stretch at Asn32–Gly110 folds into the RRM domain. The segment at Gly114–Asn182 is disordered. The span at Val126–Pro136 shows a compositional bias: basic and acidic residues. Positions Arg145–Arg175 are enriched in polar residues.

The protein belongs to the RRM NCBP2 family. In terms of assembly, component of the nuclear cap-binding complex (CBC), a heterodimer composed of cbc1 and cbc2 that interacts with capped RNAs.

It is found in the cytoplasm. Its subcellular location is the perinuclear region. The protein localises to the nucleus. Functionally, component of the CBC complex, which binds co-transcriptionally to the 5' cap of pre-mRNAs and is involved in maturation, export and degradation of nuclear mRNAs. In Schizosaccharomyces pombe (strain 972 / ATCC 24843) (Fission yeast), this protein is Nuclear cap-binding protein subunit 2 (cbc2).